Here is a 618-residue protein sequence, read N- to C-terminus: Protease 4 (618 aa).

At 1–24 (MRTLWRFIAGFFKWTWRVLNFVRE) the chain is on the cytoplasmic side. Residues 25-45 (MVLNLFFIFLVLVGVGIWMQI) form a helical membrane-spanning segment. Residues 46–618 (GNGSNSEQTA…AFCLTCANVR (573 aa)) lie on the Periplasmic side of the membrane. The active-site Proton donor/acceptor is lysine 209. Catalysis depends on serine 409, which acts as the Nucleophile.

This sequence belongs to the peptidase S49 family. Homotetramer.

It is found in the cell inner membrane. Its function is as follows. Digests cleaved signal peptides in vitro, its in vivo function is unknown. This activity is necessary to maintain proper secretion of mature proteins across the membrane. The protein is Protease 4 (sppA) of Salmonella typhi.